The primary structure comprises 855 residues: Suppressor of tumorigenicity 14 protein homolog (855 aa).

Residues 1–55 are Cytoplasmic-facing; sequence MGSNRGRKAGGGSQDFGAGLKYNSRLENMNGFEEGVEFLPANNAKKVEKRGPRRW. Position 13 is a phosphoserine (Ser-13). A helical; Signal-anchor for type II membrane protein membrane pass occupies residues 56–76; the sequence is VVLVAVLFSFLLLSLMAGLLV. The Extracellular segment spans residues 77–855; it reads WHFHYRNVRV…RDWIKEHTGV (779 aa). The region spanning 86–203 is the SEA domain; sequence VQKVFNGHLR…TSVVAFPIDP (118 aa). Asn-107 carries N-linked (GlcNAc...) asparagine glycosylation. A disulfide bridge connects residues Cys-214 and Cys-244. CUB domains follow at residues 214–331 and 340–444; these read CSFA…EATF and CGGF…LAEY. Asn-302 and Asn-365 each carry an N-linked (GlcNAc...) asparagine glycan. 2 disulfides stabilise this stretch: Cys-340-Cys-366 and Cys-397-Cys-410. N-linked (GlcNAc...) asparagine glycosylation occurs at Asn-421. LDL-receptor class A domains lie at 451–488, 489–522, 523–561, and 565–604; these read DPCPGMFMCKTGRCIRKELRCDGWADCPDYSDERYCRC, NATHQFTCKNQFCKPLFWVCDSVNDCGDGSDEEG, CSCPAGSFKCSNGKCLPQSQKCNGKDNCGDGSDEASCDS, and VSCTKYTYRCQNGLCLSKGNPECDGKTDCSDGSDEKNCDC. 13 disulfides stabilise this stretch: Cys-453–Cys-464, Cys-459–Cys-477, Cys-471–Cys-486, Cys-488–Cys-501, Cys-496–Cys-514, Cys-508–Cys-523, Cys-525–Cys-537, Cys-532–Cys-550, Cys-544–Cys-559, Cys-567–Cys-579, Cys-574–Cys-593, Cys-587–Cys-602, and Cys-641–Cys-657. Asn-489 is a glycosylation site (N-linked (GlcNAc...) asparagine). The region spanning 615-854 is the Peptidase S1 domain; sequence VVGGTNADEG…VRDWIKEHTG (240 aa). Catalysis depends on charge relay system residues His-656 and Asp-711. N-linked (GlcNAc...) asparagine glycosylation occurs at Asn-772. 2 disulfides stabilise this stretch: Cys-776-Cys-790 and Cys-801-Cys-830. The Charge relay system role is filled by Ser-805.

It belongs to the peptidase S1 family. In terms of assembly, interacts with CDCP1. May interact with TMEFF1. Highly expressed in intestine, kidney, lung, and thymus. Not expressed in skeletal muscle, liver, heart, testis and brain.

It localises to the membrane. The enzyme catalyses Cleaves various synthetic substrates with Arg or Lys at the P1 position and prefers small side-chain amino acids, such as Ala and Gly, at the P2 position.. Its function is as follows. Exhibits trypsin-like activity as defined by cleavage of synthetic substrates with Arg or Lys as the P1 site. Involved in the terminal differentiation of keratinocytes through prostasin (PRSS8) activation and filaggrin (FLG) processing. Proteolytically cleaves and therefore activates TMPRSS13. This chain is Suppressor of tumorigenicity 14 protein homolog (St14), found in Mus musculus (Mouse).